Here is a 312-residue protein sequence, read N- to C-terminus: tRNA U34 carboxymethyltransferase (312 aa).

Residues Lys88, Trp102, Lys107, Gly127, 149–151 (DPS), 177–178 (LD), Met191, Tyr195, and Arg304 each bind carboxy-S-adenosyl-L-methionine.

The protein belongs to the class I-like SAM-binding methyltransferase superfamily. CmoB family. In terms of assembly, homotetramer.

The catalysed reaction is carboxy-S-adenosyl-L-methionine + 5-hydroxyuridine(34) in tRNA = 5-carboxymethoxyuridine(34) in tRNA + S-adenosyl-L-homocysteine + H(+). In terms of biological role, catalyzes carboxymethyl transfer from carboxy-S-adenosyl-L-methionine (Cx-SAM) to 5-hydroxyuridine (ho5U) to form 5-carboxymethoxyuridine (cmo5U) at position 34 in tRNAs. The sequence is that of tRNA U34 carboxymethyltransferase from Dichelobacter nodosus (strain VCS1703A).